The primary structure comprises 77 residues: Translation initiation factor IF-1, chloroplastic (77 aa).

Positions 1 to 71 (MKEQKLIHEG…TRGRIIYRLR (71 aa)) constitute an S1-like domain.

Belongs to the IF-1 family. Component of the 30S ribosomal translation pre-initiation complex which assembles on the 30S ribosome in the order IF-2 and IF-3, IF-1 and N-formylmethionyl-tRNA(fMet); mRNA recruitment can occur at any time during PIC assembly.

The protein localises to the plastid. Its subcellular location is the chloroplast. In terms of biological role, one of the essential components for the initiation of protein synthesis. Stabilizes the binding of IF-2 and IF-3 on the 30S subunit to which N-formylmethionyl-tRNA(fMet) subsequently binds. Helps modulate mRNA selection, yielding the 30S pre-initiation complex (PIC). Upon addition of the 50S ribosomal subunit IF-1, IF-2 and IF-3 are released leaving the mature 70S translation initiation complex. In Cabomba caroliniana (Carolina fanwort), this protein is Translation initiation factor IF-1, chloroplastic.